Consider the following 447-residue polypeptide: Dihydroorotase (447 aa).

Histidine 81 and histidine 83 together coordinate Zn(2+). Residues 83 to 85 (HFR) and asparagine 115 each bind substrate. Zn(2+)-binding residues include aspartate 171, histidine 198, and histidine 252. Asparagine 298 is a substrate binding site. Aspartate 325 contacts Zn(2+). The active site involves aspartate 325. Substrate contacts are provided by residues histidine 329 and 343 to 344 (FG).

This sequence belongs to the metallo-dependent hydrolases superfamily. DHOase family. Class I DHOase subfamily. Zn(2+) serves as cofactor.

It catalyses the reaction (S)-dihydroorotate + H2O = N-carbamoyl-L-aspartate + H(+). Its pathway is pyrimidine metabolism; UMP biosynthesis via de novo pathway; (S)-dihydroorotate from bicarbonate: step 3/3. Catalyzes the reversible cyclization of carbamoyl aspartate to dihydroorotate. This is Dihydroorotase from Ehrlichia chaffeensis (strain ATCC CRL-10679 / Arkansas).